A 54-amino-acid polypeptide reads, in one-letter code: Conotoxin Cal6.17 (54 aa).

The signal sequence occupies residues 1 to 19 (MSGTGVLLLTLLLLVTMAT). Intrachain disulfides connect Cys24–Cys39, Cys32–Cys49, and Cys38–Cys53.

Expressed by the venom duct.

It localises to the secreted. Functionally, probable neurotoxin. In Californiconus californicus (California cone), this protein is Conotoxin Cal6.17.